Here is a 527-residue protein sequence, read N- to C-terminus: N-acetylglucosamine-1-phosphodiester alpha-N-acetylglucosaminidase (527 aa).

Positions 1–25 (MASSMGRFLLFFIALRGFLLEASGD) are cleaved as a signal peptide. Residues 26-49 (FGSGASRDDDVLLPYSRARARLAR) constitute a propeptide, removed in mature form. Residues 50 to 463 (DCTRVHAGRL…SLLTRTTWLA (414 aa)) are Lumenal-facing. 5 cysteine pairs are disulfide-bonded: C116–C149, C133–C324, C308–C315, C363–C374, and C381–C390. N-linked (GlcNAc...) asparagine glycosylation is found at N209, N215, and N297. Residues 359–391 (DKLDCGPANCSQHGLCTETGCRCEAGWTGSNCS) form the EGF-like domain. N367, N389, and N421 each carry an N-linked (GlcNAc...) asparagine glycan. The helical transmembrane segment at 464 to 484 (ITLALAFLLLISTAANVSLFL) threads the bilayer. The Cytoplasmic segment spans residues 485 to 527 (GSRAARRRHLDGAYVYHPLQEVNGEHPAAEKEQLGDSSNPFKD). A mediates the interaction with AP4M1 region spans residues 498 to 505 (YVYHPLQE). The Tyrosine-based internalization motif signature appears at 500–503 (YHPL). The short motif at 523–527 (NPFKD) is the NPF internalization motif element.

In terms of assembly, homotetramer arranged as two disulfide-linked homodimers. Interacts with AP4M1. In terms of processing, glycosylated. Contains complex N-linked oligosaccharides with appreciable amounts of sialic acid. The precursor is cleaved and activated in the trans-Golgi network by a furin endopeptidase.

It is found in the golgi apparatus. The protein localises to the golgi stack membrane. It localises to the trans-Golgi network. It catalyses the reaction N(4)-[6-(N-acetyl-alpha-D-glucosaminyl-1-phospho)-alpha-D-mannosyl-(1-&gt;2)-alpha-D-mannosyl-(glycan)]-L-asparaginyl-[protein] + H2O = N(4)-[6-phospho-alpha-D-mannosyl-(1-&gt;2)-alpha-D-mannosyl-(glycan)]-L-asparaginyl-[protein] + N-acetyl-D-glucosamine + H(+). The protein operates within protein modification; protein glycosylation. Functionally, catalyzes the second step in the formation of the mannose 6-phosphate targeting signal on lysosomal enzyme oligosaccharides by removing GlcNAc residues from GlcNAc-alpha-P-mannose moieties, which are formed in the first step. Also hydrolyzes UDP-GlcNAc, a sugar donor for Golgi N-acetylglucosaminyltransferases. In Bos taurus (Bovine), this protein is N-acetylglucosamine-1-phosphodiester alpha-N-acetylglucosaminidase (NAGPA).